A 460-amino-acid chain; its full sequence is Putative 2,3-dihydroxypropane-1-sulfonate exporter (460 aa).

Topologically, residues 1–18 (MSQTSSNPATLRLPFKEK) are cytoplasmic. A helical transmembrane segment spans residues 19–39 (LAYGLGDLGSNILLDIGTLYL). The Periplasmic segment spans residues 40–46 (LKFYTDV). Residues 47 to 67 (LGLPGTYGGIIFLIAKFFTAF) form a helical membrane-spanning segment. Over 68–91 (TDMGTGIMLDSRRKIGPKGKFRPF) the chain is Cytoplasmic. Residues 92-112 (VLYAAFPVTLLAIANFVGTPF) form a helical membrane-spanning segment. Residues 113 to 122 (EVTGKTVVAT) lie on the Periplasmic side of the membrane. Residues 123 to 143 (MLFMLYGLVFSMMNCSYGAMV) form a helical membrane-spanning segment. The Cytoplasmic segment spans residues 144–161 (PAITKNPDERASLAAWRQ). Residues 162–182 (GGATLGLLLCTVGFVPVMNLI) form a helical membrane-spanning segment. Topologically, residues 183–190 (EGNAQLSY) are periplasmic. The helical transmembrane segment at 191–211 (IFAATLFSLFGLLFMWLCYAG) threads the bilayer. Residues 212-242 (VKERYVEVKPVDSAQKPGLLQSFRAIAGNRP) lie on the Cytoplasmic side of the membrane. The chain crosses the membrane as a helical span at residues 243–263 (LFILCIANLCTLGAFNVKLAI). Over 264 to 275 (QVYYTQYVLNDP) the chain is Periplasmic. The chain crosses the membrane as a helical span at residues 276–296 (ILLSWMGFFSMGCIFIGVFLM). Over 297–307 (PGAVRRFGKKK) the chain is Cytoplasmic. The helical transmembrane segment at 308 to 328 (VYIGGLLIWVAGDLLNYFFGG) threads the bilayer. A topological domain (periplasmic) is located at residue Gly329. The helical transmembrane segment at 330 to 350 (SVSFVAFSCLAFFGSAFVNSL) threads the bilayer. Residues 351 to 386 (NWALVSDTVEYGEWRTGVRSEGTVYTGFTFFRKVSQ) are Cytoplasmic-facing. A helical transmembrane segment spans residues 387-407 (ALAGFFPGWMLTQIGYIPNVV). Over 408 to 418 (QSAGTVEGLRQ) the chain is Periplasmic. Residues 419–439 (LIFIYPCVLAVITIIAMGCFY) form a helical membrane-spanning segment. At 440 to 460 (NLNEKMYVRIVEEIEARKHTV) the chain is on the cytoplasmic side.

It belongs to the sodium:galactoside symporter (TC 2.A.2) family.

It is found in the cell inner membrane. In terms of biological role, could be involved in the export of 2,3-dihydroxypropane-1-sulfonate (DHPS). This chain is Putative 2,3-dihydroxypropane-1-sulfonate exporter (yihP), found in Salmonella typhimurium (strain LT2 / SGSC1412 / ATCC 700720).